A 364-amino-acid chain; its full sequence is Methylthioribose-1-phosphate isomerase (364 aa).

The Proton donor role is filled by D246.

The protein belongs to the eIF-2B alpha/beta/delta subunits family. MtnA subfamily.

The protein localises to the cytoplasm. The protein resides in the nucleus. The catalysed reaction is 5-(methylsulfanyl)-alpha-D-ribose 1-phosphate = 5-(methylsulfanyl)-D-ribulose 1-phosphate. It functions in the pathway amino-acid biosynthesis; L-methionine biosynthesis via salvage pathway; L-methionine from S-methyl-5-thio-alpha-D-ribose 1-phosphate: step 1/6. Its function is as follows. Catalyzes the interconversion of methylthioribose-1-phosphate (MTR-1-P) into methylthioribulose-1-phosphate (MTRu-1-P). The sequence is that of Methylthioribose-1-phosphate isomerase from Bombyx mori (Silk moth).